The following is an 823-amino-acid chain: Putative E3 ubiquitin-protein ligase RF4 (823 aa).

3 disordered regions span residues 24–72 (TVSP…NGSV), 224–291 (SKLS…CSGS), and 432–464 (ESVT…SEEK). The span at 61 to 72 (KPQNHLSGNGSV) shows a compositional bias: polar residues. Residues 224-240 (SKLSDSESLGAESNPPK) show a composition bias toward low complexity. Polar residues predominate over residues 267–282 (FPNTPNSKKTQSSGTT). The span at 453-464 (SEKKSGSESEEK) shows a compositional bias: basic and acidic residues. Positions 536–738 (ELKALRKERE…ELKLKSDYSR (203 aa)) form a coiled coil. The RING-type zinc-finger motif lies at 768–808 (CVMCLSEEMSVIFLPCAHQVLCFKCNQLHEKEGMMDCPSCR).

Belongs to the RING-type zinc finger family.

The catalysed reaction is S-ubiquitinyl-[E2 ubiquitin-conjugating enzyme]-L-cysteine + [acceptor protein]-L-lysine = [E2 ubiquitin-conjugating enzyme]-L-cysteine + N(6)-ubiquitinyl-[acceptor protein]-L-lysine.. The protein operates within protein modification; protein ubiquitination. The polypeptide is Putative E3 ubiquitin-protein ligase RF4 (RF4) (Arabidopsis thaliana (Mouse-ear cress)).